Consider the following 876-residue polypeptide: DDB1- and CUL4-associated factor 6 (876 aa).

5 WD repeats span residues 49 to 88 (VHDGCVNTICWNDTGEYILSGSDDTKLVISNPYSRKVLTT), 92 to 133 (GHRA…ETNR), 139 to 179 (CHYG…SCTK), 189 to 229 (NCRR…TRAT), and 251 to 290 (NKSCRVTSLCYSEDGQEILVSYSSDYIYLFDPKDDTAREL). 2 stretches are compositionally biased toward basic and acidic residues: residues 288-303 (RELKTPSAEERREELR) and 312-334 (LRGDWSDTGPRARPESERERDGE). Disordered regions lie at residues 288-340 (RELK…PNVS), 355-391 (EASEVAQSNRGRGRPRPRGGTNQPDVSTLPTVPSSPN), 408-485 (LQPS…TEGT), 498-645 (WSST…NPEL), and 658-691 (EDPSARDSALQDTDDSDDDPVLIPGARYRTGPGD). At S336 the chain carries Phosphoserine. 2 stretches are compositionally biased toward polar residues: residues 375-391 (TNQPDVSTLPTVPSSPN) and 409-422 (QPSTSSTDPVQAQA). The segment covering 456 to 466 (HQSDNSNERLS) has biased composition (basic and acidic residues). A compositionally biased stretch (low complexity) spans 499 to 510 (SSTASSSRGNGS). Residues 534-544 (SETRAPEELSE) show a composition bias toward basic and acidic residues. Polar residues-rich tracts occupy residues 550–562 (ENLTQNQIDTAQL), 571–584 (DSNSGEKNNPSQDS), 603–613 (EQASTESATRH), and 621–645 (PSQTEAIEQASTESATRHTSANPEL). The residue at position 665 (S665) is a Phosphoserine. Residue T670 is modified to Phosphothreonine. Residue S673 is modified to Phosphoserine. Residues 692–721 (RRSAVARIQEFFRRRKERKEMEELDTLNIR) form the IQ domain. WD repeat units lie at residues 734 to 772 (NSRTMIKEANFWGANFVMSGSDCGHIFIWDRHTAEHLML) and 775 to 814 (ADNHVVNCLQPHPFDPILASSGIDYDIKIWSPLEESRIFN). Phosphoserine occurs at positions 863 and 866.

Interacts with the nuclear receptors NR3C1 and AR in the presence of ligand. Interacts with DDB1, CUL4A and CUL4B.

It is found in the nucleus. It participates in protein modification; protein ubiquitination. Its function is as follows. Ligand-dependent coactivator of nuclear receptors. Enhance transcriptional activity of the nuclear receptors NR3C1 and AR. May function as a substrate receptor for CUL4-DDB1 E3 ubiquitin-protein ligase complex. The protein is DDB1- and CUL4-associated factor 6 (Dcaf6) of Mus musculus (Mouse).